The primary structure comprises 409 residues: Peptidase T (409 aa).

Position 78 (histidine 78) interacts with Zn(2+). Residue aspartate 80 is part of the active site. Zn(2+) is bound at residue aspartate 140. Residue glutamate 173 is the Proton acceptor of the active site. Zn(2+)-binding residues include glutamate 174, aspartate 196, and histidine 379.

Belongs to the peptidase M20B family. It depends on Zn(2+) as a cofactor.

Its subcellular location is the cytoplasm. The catalysed reaction is Release of the N-terminal residue from a tripeptide.. Cleaves the N-terminal amino acid of tripeptides. This is Peptidase T from Serratia proteamaculans (strain 568).